We begin with the raw amino-acid sequence, 475 residues long: uncharacterized protein (475 aa).

4Fe-4S ferredoxin-type domains are found at residues 303-333 (ASEF…GHGY) and 352-381 (YKDF…LSKL). The [4Fe-4S] cluster site is built by cysteine 312, cysteine 315, cysteine 318, cysteine 322, cysteine 362, cysteine 365, cysteine 368, and cysteine 372.

It belongs to the LutB/YkgF family.

This is an uncharacterized protein from Escherichia coli (strain K12).